Consider the following 273-residue polypeptide: Glutamate racemase (273 aa).

Substrate contacts are provided by residues 11–12 (DS) and 43–44 (YG). Catalysis depends on C74, which acts as the Proton donor/acceptor. 75 to 76 (NT) contributes to the substrate binding site. The Proton donor/acceptor role is filled by C185. A substrate-binding site is contributed by 186–187 (TH).

It belongs to the aspartate/glutamate racemases family. Homodimer.

It catalyses the reaction L-glutamate = D-glutamate. It functions in the pathway cell wall biogenesis; peptidoglycan biosynthesis. Functionally, provides the (R)-glutamate required for cell wall biosynthesis. The sequence is that of Glutamate racemase from Enterococcus faecalis (strain ATCC 700802 / V583).